The following is a 270-amino-acid chain: Regulatory protein RecX (270 aa).

It belongs to the RecX family.

The protein resides in the cytoplasm. Its function is as follows. Modulates RecA activity. In Bacillus cereus (strain ZK / E33L), this protein is Regulatory protein RecX.